The chain runs to 331 residues: MSILPGFLLSFAIAIVSYLLNRFIFHSLGSATIAILLGIILGNLYFKQVTLFAGTAWSEKKLLEFSVMFLGATVTFQTIGKLGFSGVGFILIQMISTIIFVLFMGKKLGFSANVSALMASGNAVCGSSAIAAVEPVIGAETSEKRTSIAMVNLMGTILMLSLPFLGTWMFGNNDLLRGALIGGTEQSVGQVVASATMVNPNTTTLATLFKIMRIIMLVFVVLYFGFRSKKQKRNEQGPTQIKIKRNSFLPWYVLGFLVLCTLDTLIHFVPEVSATAKFLSGWCETIALAAIGLRLNLVEFIKAGKKLLIYGLSTLVFQVVLALILISLLIK.

A run of 8 helical transmembrane segments spans residues 2 to 20 (SILP…SYLL), 24 to 46 (IFHS…NLYF), 82 to 104 (LGFS…VLFM), 114 to 136 (VSAL…VEPV), 148 to 170 (IAMV…TWMF), 204 to 226 (TLAT…YFGF), 247 to 269 (SFLP…IHFV), and 308 to 330 (LIYG…SLLI).

This sequence belongs to the UPF0324 family.

It is found in the cell membrane. This chain is UPF0324 membrane protein YdhF (ydhF), found in Lactococcus lactis subsp. lactis (strain IL1403) (Streptococcus lactis).